We begin with the raw amino-acid sequence, 285 residues long: K88 fimbrial protein AD (285 aa).

An N-terminal signal peptide occupies residues 1-21; that stretch reads MKKTLIALAIAASAASGMAHA.

It belongs to the fimbrial K88 protein family. K88 fimbria, 0.1-1 micrometer in length and 7 nanometers in diameter, is composed of about 100 identical subunits.

It localises to the fimbrium. In terms of biological role, K88 major fimbrial subunit. Fimbriae (also called pili), are polar filaments radiating from the surface of the bacterium to a length of 0.5-1.5 micrometers and numbering 100-300 per cell. They enable bacteria to colonize the epithelium of specific host organs. The polypeptide is K88 fimbrial protein AD (faeG) (Escherichia coli).